A 148-amino-acid chain; its full sequence is Transcriptional regulator MraZ (148 aa).

SpoVT-AbrB domains are found at residues 5-53 (ETAI…VEKE) and 82-125 (SALL…SEQA).

The protein belongs to the MraZ family. Forms oligomers.

The protein resides in the cytoplasm. It localises to the nucleoid. In Xylella fastidiosa (strain 9a5c), this protein is Transcriptional regulator MraZ.